A 472-amino-acid chain; its full sequence is Ribulose bisphosphate carboxylase large chain (472 aa).

2 residues coordinate substrate: Asn116 and Thr166. The active-site Proton acceptor is Lys168. A substrate-binding site is contributed by Lys170. Positions 194, 196, and 197 each coordinate Mg(2+). The residue at position 194 (Lys194) is an N6-carboxylysine. His287 functions as the Proton acceptor in the catalytic mechanism. 3 residues coordinate substrate: Arg288, His320, and Ser372.

The protein belongs to the RuBisCO large chain family. Type I subfamily. Heterohexadecamer of 8 large chains and 8 small chains. Mg(2+) is required as a cofactor.

The enzyme catalyses 2 (2R)-3-phosphoglycerate + 2 H(+) = D-ribulose 1,5-bisphosphate + CO2 + H2O. The catalysed reaction is D-ribulose 1,5-bisphosphate + O2 = 2-phosphoglycolate + (2R)-3-phosphoglycerate + 2 H(+). RuBisCO catalyzes two reactions: the carboxylation of D-ribulose 1,5-bisphosphate, the primary event in carbon dioxide fixation, as well as the oxidative fragmentation of the pentose substrate. Both reactions occur simultaneously and in competition at the same active site. This is Ribulose bisphosphate carboxylase large chain from Nitrobacter vulgaris.